A 274-amino-acid chain; its full sequence is 2-amino-4,5-dihydroxy-6-oxo-7-(phosphonooxy)heptanoate synthase (274 aa).

It belongs to the DeoC/FbaB aldolase family. GriI subfamily. Homodecamer.

The catalysed reaction is 2-amino-4,5-dihydroxy-6-oxo-7-(phosphooxy)heptanoate = L-aspartate 4-semialdehyde + dihydroxyacetone phosphate. Functionally, catalyzes aldol condensation between L-aspartate-4-semialdehyde (ASA) and dihydroxyacetone phosphate (DHAP), to form 2-amino-4,5-dihydroxy-6-oxo-7-(phosphonooxy)heptanoate. The protein is 2-amino-4,5-dihydroxy-6-oxo-7-(phosphonooxy)heptanoate synthase (griI) of Streptomyces griseus subsp. griseus (strain JCM 4626 / CBS 651.72 / NBRC 13350 / KCC S-0626 / ISP 5235).